The following is a 249-amino-acid chain: Ribonuclease PH (249 aa).

Phosphate contacts are provided by residues Arg86 and 124 to 126 (GTR).

This sequence belongs to the RNase PH family. Homohexameric ring arranged as a trimer of dimers.

The catalysed reaction is tRNA(n+1) + phosphate = tRNA(n) + a ribonucleoside 5'-diphosphate. Phosphorolytic 3'-5' exoribonuclease that plays an important role in tRNA 3'-end maturation. Removes nucleotide residues following the 3'-CCA terminus of tRNAs; can also add nucleotides to the ends of RNA molecules by using nucleoside diphosphates as substrates, but this may not be physiologically important. Probably plays a role in initiation of 16S rRNA degradation (leading to ribosome degradation) during starvation. In Clostridium botulinum (strain Alaska E43 / Type E3), this protein is Ribonuclease PH.